The chain runs to 337 residues: Adenine deaminase (337 aa).

His14, His16, and His194 together coordinate Zn(2+). Glu197 functions as the Proton donor in the catalytic mechanism. Asp275 contacts Zn(2+). Asp276 lines the substrate pocket.

It belongs to the metallo-dependent hydrolases superfamily. Adenosine and AMP deaminases family. Adenine deaminase type 2 subfamily. The cofactor is Zn(2+).

The enzyme catalyses adenine + H2O + H(+) = hypoxanthine + NH4(+). Catalyzes the hydrolytic deamination of adenine to hypoxanthine. Plays an important role in the purine salvage pathway and in nitrogen catabolism. This is Adenine deaminase from Vibrio parahaemolyticus serotype O3:K6 (strain RIMD 2210633).